We begin with the raw amino-acid sequence, 329 residues long: MALTLQVKNELATVPVQKLCCRRSEIAATLRFAGGIHLVQHRHLTIEAEVDTGGAARRLRQSIQEVFGFDTDLVVVNGAGLHSNTRYLIRMVRGGADLARLTGLLDRRGRPVRGLPVPIVGGGRCCQAAAWRGAFLARGSLTEPGRSMAMEITAPGEEAAMALVGAARRLDITAKQRESRHVDRVTIRDGDAISAMLTRMGAHESVLAWEDRRLRREVRASANRLANFDDANLRRSARAAVTASARVERALEILGDSVPDHLRAAGRLRLEHRNASLEELGKVHEPPLTKDAIAGRIRRLLALADKTARSNGEPTTLESLPVEMRDDRG.

The segment at residues 276–309 (SLEELGKVHEPPLTKDAIAGRIRRLLALADKTAR) is a DNA-binding region (H-T-H motif). The disordered stretch occupies residues 308 to 329 (ARSNGEPTTLESLPVEMRDDRG). Residues 309–318 (RSNGEPTTLE) are compositionally biased toward polar residues.

It belongs to the WhiA family.

Its function is as follows. Involved in cell division and chromosome segregation. The polypeptide is Probable cell division protein WhiA (Cutibacterium acnes (strain DSM 16379 / KPA171202) (Propionibacterium acnes)).